Consider the following 465-residue polypeptide: MAP kinase-interacting serine/threonine-protein kinase 2 (465 aa).

The interval 23–72 (ELAFSLDQPDHGDSDFGLQCSARPDMPASQPIDIPDAKKRGKKKKRGRAT) is disordered. Positions 60–66 (KKRGKKK) match the Nuclear localization signal motif. Serine 74 carries the post-translational modification Phosphoserine. The Protein kinase domain maps to 84–388 (QLQEDVLGEG…TPMVLQRNSC (305 aa)). ATP is bound by residues 90–98 (LGEGAHARV) and lysine 113. 160-162 (EKM) serves as a coordination point for staurosporine. Catalysis depends on aspartate 205, which acts as the Proton acceptor. Glutamate 209 provides a ligand contact to staurosporine. Threonine 244 and threonine 249 each carry phosphothreonine. Positions 299, 311, and 314 each coordinate Zn(2+). Phosphothreonine is present on threonine 379. Residues serine 437 and serine 440 each carry the phosphoserine modification. Residues 444–448 (LAQRR) carry the MAP kinase binding motif. Position 452 is a phosphoserine (serine 452).

It belongs to the protein kinase superfamily. CAMK Ser/Thr protein kinase family. Monomer. Interacts with the C-terminal regions of EIF4G1 and EIF4G2; this interaction is promoted when MAPK pathways are repressed but repressed upon ERK proteins activation. Also binds to dephosphorylated MAPK3/ERK1 and MAPK1/ERK2. Isoform 1 interaction with phosphorylated MAPK3/ERK1 and MAPK1/ERK2 protects it from dephosphorylation and inactivation. Isoform 2 interacts with ESR2 and EIF4E in the nucleus. Mg(2+) serves as cofactor. Requires Zn(2+) as cofactor. Post-translationally, dual phosphorylation of Thr-244 and Thr-249 activates the kinase. Phosphorylation of Thr-379 activates the kinase. Phosphorylated upon arsenic trioxide As(2)O(3) treatment. Phosphorylated by MAPK1/ERK2, MAPK11 and MAPK14. Dephosphorylated by PP2A. Ubiquitously expressed in all tissues examined. Isoform 2 is expressed at higher levels in the ovary than is isoform 1.

Its subcellular location is the nucleus. The protein localises to the PML body. The protein resides in the cytoplasm. The catalysed reaction is L-seryl-[protein] + ATP = O-phospho-L-seryl-[protein] + ADP + H(+). It carries out the reaction L-threonyl-[protein] + ATP = O-phospho-L-threonyl-[protein] + ADP + H(+). Its activity is regulated as follows. Inhibited by CGP57380 and staurosporine. Activated by phosphorylation in a negative-feedback regulatory manner in response to chemotherapy (e.g. cytarabine) and thus impairs the generation of antileukemic responses. Its function is as follows. Serine/threonine-protein kinase that phosphorylates SFPQ/PSF, HNRNPA1 and EIF4E. May play a role in the response to environmental stress and cytokines. Appears to regulate translation by phosphorylating EIF4E, thus increasing the affinity of this protein for the 7-methylguanosine-containing mRNA cap. Required for mediating PP2A-inhibition-induced EIF4E phosphorylation. Triggers EIF4E shuttling from cytoplasm to nucleus. Isoform 1 displays a high basal kinase activity, but isoform 2 exhibits a very low kinase activity. Acts as a mediator of the suppressive effects of IFNgamma on hematopoiesis. Negative regulator for signals that control generation of arsenic trioxide As(2)O(3)-dependent apoptosis and anti-leukemic responses. Involved in anti-apoptotic signaling in response to serum withdrawal. This chain is MAP kinase-interacting serine/threonine-protein kinase 2 (MKNK2), found in Homo sapiens (Human).